The following is a 177-amino-acid chain: HVA22-like protein a (177 aa).

Transmembrane regions (helical) follow at residues 18 to 38 (VLAG…QAIE), 47 to 67 (QWLT…TFAK), and 68 to 88 (LIEW…WLVI).

This sequence belongs to the DP1 family. In terms of tissue distribution, predominantly expressed in flower buds and stem.

The protein localises to the membrane. This chain is HVA22-like protein a (HVA22A), found in Arabidopsis thaliana (Mouse-ear cress).